The primary structure comprises 242 residues: MASRQSQKRLTKEYKAITLNPPPYVSAKPNDENILEWHYVITGPPHTPFEEGQYHGILRFPSEYPFKPPSISMITPNGRFACNTRLCLSMSDYHPDTWNPAWSVATILTGLLSFMTGDESTTGSITTSDNVKKRLARSSKEWNNAENQRFTKQFPDLVAQNKVDVAARNAREQAAATTDSTDPEKPFDVRENIDSLDPEDRARLLVEQDDHSTPSFGVQRFTLVGVVVAAFIAAYFNFFSRT.

Residues 1–220 lie on the Cytoplasmic side of the membrane; the sequence is MASRQSQKRL…HSTPSFGVQR (220 aa). The UBC core domain maps to 5-156; sequence QSQKRLTKEY…NQRFTKQFPD (152 aa). Cys-87 serves as the catalytic Glycyl thioester intermediate. Residues 170-190 form a disordered region; sequence AREQAAATTDSTDPEKPFDVR. Residues 221 to 240 form a helical membrane-spanning segment; the sequence is FTLVGVVVAAFIAAYFNFFS.

This sequence belongs to the ubiquitin-conjugating enzyme family.

Its subcellular location is the endoplasmic reticulum membrane. The enzyme catalyses S-ubiquitinyl-[E1 ubiquitin-activating enzyme]-L-cysteine + [E2 ubiquitin-conjugating enzyme]-L-cysteine = [E1 ubiquitin-activating enzyme]-L-cysteine + S-ubiquitinyl-[E2 ubiquitin-conjugating enzyme]-L-cysteine.. It participates in protein modification; protein ubiquitination. Functionally, catalyzes the covalent attachment of ubiquitin to other proteins. Functions in degradation of misfolded or regulated proteins localized in the endoplasmic reticulum (ER) lumen or membrane via the ubiquitin-proteasome system. Cognate E2 conjugating enzyme for the DOA10 ubiquitin ligase complex, which is part of the ERAD-C pathway responsible for the rapid degradation of membrane proteins with misfolded cytoplasmic domains. The protein is Ubiquitin-conjugating enzyme E2 6 (UBC6) of Debaryomyces hansenii (strain ATCC 36239 / CBS 767 / BCRC 21394 / JCM 1990 / NBRC 0083 / IGC 2968) (Yeast).